The sequence spans 168 residues: Nascent polypeptide-associated complex subunit alpha (168 aa).

The 65-residue stretch at 14 to 78 (SKNEKKAREL…PKVDDFTRRL (65 aa)) folds into the NAC-A/B domain. Residues 83–129 (QQAASAAKDPQSIQADMAAAAAAPAAPAAPAAAPEEDEAGQVDESGL) are disordered. The segment covering 100 to 115 (AAAAAAPAAPAAPAAA) has biased composition (low complexity). The UBA domain maps to 129–168 (LDGQDIELVMQQANVSRNKAVKALREHNSDIVNAIMSLSK).

Belongs to the NAC-alpha family. In terms of assembly, part of the nascent polypeptide-associated complex (NAC), consisting of EGD2 and EGD1. NAC associates with ribosomes via EGD1.

The protein localises to the cytoplasm. Its subcellular location is the nucleus. Component of the nascent polypeptide-associated complex (NAC), a dynamic component of the ribosomal exit tunnel, protecting the emerging polypeptides from interaction with other cytoplasmic proteins to ensure appropriate nascent protein targeting. The NAC complex also promotes mitochondrial protein import by enhancing productive ribosome interactions with the outer mitochondrial membrane and blocks the inappropriate interaction of ribosomes translating non-secretory nascent polypeptides with translocation sites in the membrane of the endoplasmic reticulum. EGD2 may also be involved in transcription regulation. This Eremothecium gossypii (strain ATCC 10895 / CBS 109.51 / FGSC 9923 / NRRL Y-1056) (Yeast) protein is Nascent polypeptide-associated complex subunit alpha (EGD2).